The primary structure comprises 2514 residues: Nuclear receptor corepressor 2 (2514 aa).

Residues 1-13 (MSGSTQPVAQTWR) are compositionally biased toward polar residues. Residues 1 to 24 (MSGSTQPVAQTWRATEPRYPPHSL) are disordered. Arg18 is modified (asymmetric dimethylarginine). Ser54, Ser67, Ser149, and Ser152 each carry phosphoserine. Disordered regions lie at residues 120-162 (PSPL…ELEL) and 190-220 (ISKL…PPIE). Phosphothreonine is present on Thr156. The stretch at 174–215 (QNMDRVDREITMVEQQISKLKKKQQQLEEEAAKPPEPEKPVS) forms a coiled coil. Basic and acidic residues predominate over residues 203–212 (EAAKPPEPEK). Ser215 is subject to Phosphoserine. An interaction with SIN3A/B region spans residues 254 to 312 (LPLYNQPSDTRQYHENIKINQAMRKKLILYFKRRNHARKQWEQKFCQRYDQLMEAWEKK). The interval 389-480 (MRQLAVIPPM…YLTKKNENYK (92 aa)) is deacetylase activation domain (DAD). The SANT 1 domain occupies 427 to 478 (QVMNMWSEQEKETFREKFMQHPKNFGLIASFLERKTVAECVLYYYLTKKNEN). Residues Lys449, Tyr470, and Tyr471 each coordinate 1D-myo-inositol 1,4,5,6-tetrakisphosphate. Disordered regions lie at residues 487-622 (YRRR…EMET), 674-1081 (EKER…APPG), and 1165-1186 (SGVK…SLGV). A Phosphoserine modification is found at Ser493. Over residues 494-510 (QQQQQQQQQQQQQQQQQ) the composition is skewed to low complexity. The span at 516-552 (SQEEKDEKEKEKEAEKEEEKPEVENDKEDLLKEKTDD) shows a compositional bias: basic and acidic residues. Residues 522-561 (EKEKEKEAEKEEEKPEVENDKEDLLKEKTDDTSGEDNDEK) are a coiled coil. Thr553 is modified (phosphothreonine). The residue at position 554 (Ser554) is a Phosphoserine. Composition is skewed to polar residues over residues 597–613 (TPQQ…NESS) and 740–753 (ATVN…SIPS). Residues 610–661 (NESSRWTEEEMETAKKGLLEHGRNWSAIARMVGSKTVSQCKNFYFNYKKRQN) enclose the SANT 2 domain. Residues Ser750 and Ser753 each carry the phosphoserine modification. Composition is skewed to pro residues over residues 777 to 796 (GPPP…PTEP) and 806 to 822 (PTPP…PPVV). Positions 856–866 (GKAEEPVKSEC) are enriched in basic and acidic residues. Lys878 carries the post-translational modification N6-acetyllysine. The span at 902-921 (RATTAKSSGAPQDSDSSATC) shows a compositional bias: polar residues. Over residues 937 to 948 (LLSPRPSLLTPT) the composition is skewed to low complexity. Residue Ser939 is modified to Phosphoserine. Thr946 carries the post-translational modification Phosphothreonine. Ser956 is modified (phosphoserine). Lys959 is modified (N6-acetyllysine). A compositionally biased stretch (basic and acidic residues) spans 980–990 (KVHEPPREDAA). Pro residues predominate over residues 993–1004 (KPAPPAPPPPQN). A compositionally biased stretch (polar residues) spans 1005–1014 (LQPESDAPQQ). A Glycyl lysine isopeptide (Lys-Gly) (interchain with G-Cter in SUMO2) cross-link involves residue Lys1168. The residue at position 1173 (Ser1173) is a Phosphoserine. Lys1210 and Lys1240 each carry N6-acetyllysine. The residue at position 1251 (Ser1251) is a Phosphoserine. Residues 1287–1307 (TQCSKEDGRSSSGPPHETAAP) are disordered. A Phosphoserine modification is found at Ser1323. Thr1383 is modified (phosphothreonine). Disordered regions lie at residues 1440-1482 (PLAP…SPGR) and 1506-1609 (ESLK…HPIS). The residue at position 1479 (Ser1479) is a Phosphoserine. The segment covering 1513–1526 (GTASSSGGSIARGA) has biased composition (low complexity). Phosphoserine occurs at positions 1539, 1595, and 1619. Arg1653 is modified (asymmetric dimethylarginine). Disordered regions lie at residues 1763–1867 (TAPQ…TQDA) and 1937–2124 (KEAP…PGVK). The span at 1766–1782 (QPFSSRHSSSPLSPGGP) shows a compositional bias: low complexity. Phosphoserine is present on residues Ser1775 and Ser1778. Over residues 1794 to 1813 (SERERDRDRERDRDREREKS) the composition is skewed to basic and acidic residues. A Phosphoserine modification is found at Ser1861. Over residues 1938-1952 (EAPRVARPERPRADT) the composition is skewed to basic and acidic residues. At Lys1959 the chain carries N6-acetyllysine. Ser2005 bears the Phosphoserine mark. Lys2026 is subject to N6-acetyllysine. The segment covering 2043–2060 (SSYSPEGVEPVSPVSSPS) has biased composition (low complexity). Ser2046, Ser2054, Ser2057, Ser2058, and Ser2060 each carry phosphoserine. Phosphothreonine is present on Thr2062. Over residues 2062–2085 (THDKGLPKHLEELDKSHLEGELRP) the composition is skewed to basic and acidic residues. Position 2077 is a phosphoserine (Ser2077). Over residues 2106-2117 (LPESQPSSSPLL) the composition is skewed to low complexity. A required for interaction with RARA in the absence of its ligand region spans residues 2128–2131 (RVVT). The CORNR box of ID1 motif lies at 2136–2140 (ISEVI). Disordered stretches follow at residues 2174–2235 (RRPP…GHSR) and 2248–2269 (QTEP…PAFF). 3 positions are modified to phosphoserine: Ser2203, Ser2223, and Ser2258. The CORNR box of ID2 motif lies at 2339-2343 (LEAII). The interval 2384 to 2500 (DGRSDHTLTS…PHHAWDEEPK (117 aa)) is disordered. Phosphoserine is present on Ser2413. The segment covering 2482–2492 (PAGSGPLAGPH) has biased composition (low complexity).

This sequence belongs to the N-CoR nuclear receptor corepressors family. As to quaternary structure, forms a large corepressor complex that contains SIN3A/B and histone deacetylases HDAC1 and HDAC2. This complex associates with the thyroid (TR) and the retinoid acid receptors (RAR) in the absence of ligand, and may stabilize their interaction with TFIIB. Interacts directly with RARA in the absence of ligand; the interaction represses RARA activity. Interacts (isoform SMRT) with HDAC10. Interacts with MINT. Component of the N-Cor repressor complex, at least composed of NCOR1, NCOR2, HDAC3, TBL1X, TBL1R, CORO2A and GPS2. Interacts with CBFA2T3 and ATXN1L. Interacts with RARB; the interaction is weak and does not repress RARB transactivational activity. Interacts (via 1D-myo-inositol 1,4,5,6-tetrakisphosphate) with HDAC3; promoting the histone deacetylase activity of HDAC3. Interacts with HDAC7 and C1D. Interacts with NR4A2; this interaction increases in the absence of PITX3. Interacts with BCL6 (via the BTB domain), required for BCL6 transcriptional repressor activity on a subset of target genes. Forms ternary complexes with BCOR and BCL6 on target gene promoters but, on enhancer elements, interacts with BCL6 and HDAC3 to repress proximal gene expression. May interact with DEAF1. Interacts with RXRA. Interacts with MECP2. Interacts with ZBTB7A. Interacts with AR. Interacts with TBL1Y. Interacts with SANBR (via the BTB domain). Ubiquitous. High levels of expression are detected in lung, spleen and brain.

Its subcellular location is the nucleus. Functionally, transcriptional corepressor that mediates the transcriptional repression activity of some nuclear receptors by promoting chromatin condensation, thus preventing access of the basal transcription. Acts by recruiting chromatin modifiers, such as histone deacetylases HDAC1, HDAC2 and HDAC3. Required to activate the histone deacetylase activity of HDAC3. Involved in the regulation BCL6-dependent of the germinal center (GC) reactions, mainly through the control of the GC B-cells proliferation and survival. Recruited by ZBTB7A to the androgen response elements/ARE on target genes, negatively regulates androgen receptor signaling and androgen-induced cell proliferation. Its function is as follows. Isoform 1 and isoform 4 have different affinities for different nuclear receptors. This chain is Nuclear receptor corepressor 2, found in Homo sapiens (Human).